The following is an 85-amino-acid chain: uncharacterized protein (85 aa).

Disordered stretches follow at residues 1 to 22 (MFAPPSSLFVPATAPAPSTSGF) and 41 to 85 (EKER…SFLR). Over residues 75 to 85 (FPSNYRGSFLR) the composition is skewed to polar residues.

This is an uncharacterized protein from Dryophytes versicolor (chameleon treefrog).